Reading from the N-terminus, the 562-residue chain is Glucose-6-phosphate isomerase (562 aa).

Glu-370 acts as the Proton donor in catalysis. Residues His-401 and Lys-526 contribute to the active site.

Belongs to the GPI family.

The protein resides in the cytoplasm. The catalysed reaction is alpha-D-glucose 6-phosphate = beta-D-fructose 6-phosphate. The protein operates within carbohydrate biosynthesis; gluconeogenesis. It participates in carbohydrate degradation; glycolysis; D-glyceraldehyde 3-phosphate and glycerone phosphate from D-glucose: step 2/4. Catalyzes the reversible isomerization of glucose-6-phosphate to fructose-6-phosphate. This Deinococcus geothermalis (strain DSM 11300 / CIP 105573 / AG-3a) protein is Glucose-6-phosphate isomerase.